We begin with the raw amino-acid sequence, 285 residues long: tRNA pseudouridine synthase A (285 aa).

The active-site Nucleophile is Asp-64. Position 125 (Tyr-125) interacts with substrate.

The protein belongs to the tRNA pseudouridine synthase TruA family. Homodimer.

The catalysed reaction is uridine(38/39/40) in tRNA = pseudouridine(38/39/40) in tRNA. Its function is as follows. Formation of pseudouridine at positions 38, 39 and 40 in the anticodon stem and loop of transfer RNAs. The chain is tRNA pseudouridine synthase A from Streptomyces avermitilis (strain ATCC 31267 / DSM 46492 / JCM 5070 / NBRC 14893 / NCIMB 12804 / NRRL 8165 / MA-4680).